The sequence spans 247 residues: Carboxy-S-adenosyl-L-methionine synthase (247 aa).

S-adenosyl-L-methionine is bound by residues Y39, 64-66, 89-90, 117-118, N132, and R199; these read GCS, DN, and DI.

Belongs to the class I-like SAM-binding methyltransferase superfamily. Cx-SAM synthase family. In terms of assembly, homodimer.

It catalyses the reaction prephenate + S-adenosyl-L-methionine = carboxy-S-adenosyl-L-methionine + 3-phenylpyruvate + H2O. In terms of biological role, catalyzes the conversion of S-adenosyl-L-methionine (SAM) to carboxy-S-adenosyl-L-methionine (Cx-SAM). This is Carboxy-S-adenosyl-L-methionine synthase from Citrobacter koseri (strain ATCC BAA-895 / CDC 4225-83 / SGSC4696).